The chain runs to 228 residues: Leucyl/phenylalanyl-tRNA--protein transferase (228 aa).

It belongs to the L/F-transferase family.

The protein localises to the cytoplasm. The enzyme catalyses N-terminal L-lysyl-[protein] + L-leucyl-tRNA(Leu) = N-terminal L-leucyl-L-lysyl-[protein] + tRNA(Leu) + H(+). It catalyses the reaction N-terminal L-arginyl-[protein] + L-leucyl-tRNA(Leu) = N-terminal L-leucyl-L-arginyl-[protein] + tRNA(Leu) + H(+). The catalysed reaction is L-phenylalanyl-tRNA(Phe) + an N-terminal L-alpha-aminoacyl-[protein] = an N-terminal L-phenylalanyl-L-alpha-aminoacyl-[protein] + tRNA(Phe). Its function is as follows. Functions in the N-end rule pathway of protein degradation where it conjugates Leu, Phe and, less efficiently, Met from aminoacyl-tRNAs to the N-termini of proteins containing an N-terminal arginine or lysine. In Lawsonia intracellularis (strain PHE/MN1-00), this protein is Leucyl/phenylalanyl-tRNA--protein transferase.